Here is a 196-residue protein sequence, read N- to C-terminus: Elongation factor Ts (196 aa).

An involved in Mg(2+) ion dislocation from EF-Tu region spans residues Thr-80–Val-83.

This sequence belongs to the EF-Ts family.

Its subcellular location is the cytoplasm. Functionally, associates with the EF-Tu.GDP complex and induces the exchange of GDP to GTP. It remains bound to the aminoacyl-tRNA.EF-Tu.GTP complex up to the GTP hydrolysis stage on the ribosome. In Desulfotalea psychrophila (strain LSv54 / DSM 12343), this protein is Elongation factor Ts.